The chain runs to 148 residues: 3-dehydroquinate dehydratase (148 aa).

Tyr22 serves as the catalytic Proton acceptor. Positions 73, 79, and 86 each coordinate substrate. The active-site Proton donor is His99. Substrate contacts are provided by residues 100–101 and Arg110; that span reads LS.

Belongs to the type-II 3-dehydroquinase family. In terms of assembly, homododecamer.

The catalysed reaction is 3-dehydroquinate = 3-dehydroshikimate + H2O. It functions in the pathway metabolic intermediate biosynthesis; chorismate biosynthesis; chorismate from D-erythrose 4-phosphate and phosphoenolpyruvate: step 3/7. Catalyzes a trans-dehydration via an enolate intermediate. The polypeptide is 3-dehydroquinate dehydratase (Prochlorococcus marinus (strain MIT 9211)).